The sequence spans 478 residues: F-box protein YDR306C (478 aa).

The segment covering 1-14 (MANKSRPKKIKAPY) has biased composition (basic residues). 2 disordered regions span residues 1-32 (MANK…DNKA) and 67-101 (RLSN…VIES). Positions 80-90 (QSPSSSSTSSS) are enriched in low complexity. Basic and acidic residues predominate over residues 91–101 (KGEKNGKVIES). Positions 112–173 (KMVLPWEIQH…CLPKLYYAPA (62 aa)) constitute an F-box domain.

As to quaternary structure, interacts with SKP1. Component of the probable SCF(YDR306C) complex containing CDC53, SKP1, RBX1 and YDR306C. Autoubiquitinated by the E3 ubiquitin ligase complex in conjunction with the E2 enzyme CDC34.

It participates in protein modification; protein ubiquitination. Functionally, substrate recognition component of a SCF (SKP1-CUL1-F-box protein) E3 ubiquitin-protein ligase complex which mediates the ubiquitination and subsequent proteasomal degradation of target proteins. Probably recognizes and binds to phosphorylated target proteins. The chain is F-box protein YDR306C from Saccharomyces cerevisiae (strain ATCC 204508 / S288c) (Baker's yeast).